Reading from the N-terminus, the 332-residue chain is Glycerol-3-phosphate dehydrogenase [NAD(P)+] (332 aa).

NADPH is bound by residues S11, W12, R32, R33, and K106. Residues K106 and G136 each contribute to the sn-glycerol 3-phosphate site. Residue A140 participates in NADPH binding. K191, D244, S254, R255, and N256 together coordinate sn-glycerol 3-phosphate. K191 (proton acceptor) is an active-site residue. R255 contacts NADPH. NADPH contacts are provided by V280 and E282.

Belongs to the NAD-dependent glycerol-3-phosphate dehydrogenase family.

Its subcellular location is the cytoplasm. The enzyme catalyses sn-glycerol 3-phosphate + NAD(+) = dihydroxyacetone phosphate + NADH + H(+). It catalyses the reaction sn-glycerol 3-phosphate + NADP(+) = dihydroxyacetone phosphate + NADPH + H(+). The protein operates within membrane lipid metabolism; glycerophospholipid metabolism. Its function is as follows. Catalyzes the reduction of the glycolytic intermediate dihydroxyacetone phosphate (DHAP) to sn-glycerol 3-phosphate (G3P), the key precursor for phospholipid synthesis. The polypeptide is Glycerol-3-phosphate dehydrogenase [NAD(P)+] (Corynebacterium urealyticum (strain ATCC 43042 / DSM 7109)).